The sequence spans 270 residues: uncharacterized protein (270 aa).

The first 22 residues, 1–22, serve as a signal peptide directing secretion; the sequence is MEYIKKLLCTMSVLLLIIFIGG. Cys23 carries the N-palmitoyl cysteine lipid modification. Cys23 is lipidated: S-diacylglycerol cysteine.

Belongs to the staphylococcal tandem lipoprotein family.

It is found in the cell membrane. This is an uncharacterized protein from Staphylococcus aureus (strain bovine RF122 / ET3-1).